The sequence spans 96 residues: NADH-ubiquinone oxidoreductase chain 4L (96 aa).

The next 3 helical transmembrane spans lie at 1 to 21 (MNPT…AFYQ), 24 to 44 (LLSL…LMAI), and 57 to 77 (LPLI…VLLV).

The protein belongs to the complex I subunit 4L family.

It localises to the mitochondrion membrane. The enzyme catalyses a ubiquinone + NADH + 5 H(+)(in) = a ubiquinol + NAD(+) + 4 H(+)(out). Its function is as follows. Core subunit of the mitochondrial membrane respiratory chain NADH dehydrogenase (Complex I) which catalyzes electron transfer from NADH through the respiratory chain, using ubiquinone as an electron acceptor. Part of the enzyme membrane arm which is embedded in the lipid bilayer and involved in proton translocation. The protein is NADH-ubiquinone oxidoreductase chain 4L (MT-ND4L) of Myxine glutinosa (Atlantic hagfish).